A 551-amino-acid polypeptide reads, in one-letter code: Glucans biosynthesis protein D (551 aa).

Positions 1–32 (MDRRRFIKGSMAMAAVCGTSGIASLFSQAAFA) form a signal peptide, tat-type signal.

This sequence belongs to the OpgD/OpgG family. Post-translationally, predicted to be exported by the Tat system. The position of the signal peptide cleavage has not been experimentally proven.

Its subcellular location is the periplasm. It participates in glycan metabolism; osmoregulated periplasmic glucan (OPG) biosynthesis. Its function is as follows. Probably involved in the control of the structural glucose backbone of osmoregulated periplasmic glucans (OPGs). In Escherichia coli O1:K1 / APEC, this protein is Glucans biosynthesis protein D.